The chain runs to 347 residues: Olfactory receptor 13C3 (347 aa).

Over 1-55 (MIVQLICTVCFLAVNTFHVRSSFDFLKADDMGEINQTLVSEFLLLGLSGYPKIEI) the chain is Extracellular. A glycan (N-linked (GlcNAc...) asparagine) is linked at N35. Residues 56-76 (VYFALILVMYLVILIGNGVLI) form a helical membrane-spanning segment. The Cytoplasmic portion of the chain corresponds to 77-84 (IASIFDSH). A helical transmembrane segment spans residues 85-105 (FHTPMYFFLGNLSFLDICYTS). Topologically, residues 106–129 (SSVPSTLVSLISKKRNISFSGCAV) are extracellular. A disulfide bridge links C127 with C219. The chain crosses the membrane as a helical span at residues 130-150 (QMFFGFAMGSTECLLLGMMAF). Topologically, residues 151 to 169 (DRYVAICNPLRYPIILSKV) are cytoplasmic. Residues 170–190 (AYVLMASVSWLSGGINSAVQT) form a helical membrane-spanning segment. The Extracellular portion of the chain corresponds to 191–227 (LLAMRLPFCGNNIINHFACEILAVLKLACADISLNII). Residues 228 to 247 (TMVISNMAFLVLPLMVIFFS) traverse the membrane as a helical segment. Over 248 to 267 (YMFILYTILQMNSATGRRKA) the chain is Cytoplasmic. The helical transmembrane segment at 268-288 (FSTCSAHLTVVIIFYGTIFFM) threads the bilayer. Over 289–307 (YAKPKSQDLIGEEKLQALD) the chain is Extracellular. A helical membrane pass occupies residues 308–328 (KLISLFYGVVTPMLNPILYSL). Topologically, residues 329–347 (RNKDVKAAVKYLLNKKPIH) are cytoplasmic.

Belongs to the G-protein coupled receptor 1 family.

The protein resides in the cell membrane. In terms of biological role, odorant receptor. This is Olfactory receptor 13C3 (OR13C3) from Homo sapiens (Human).